A 305-amino-acid polypeptide reads, in one-letter code: Ferredoxin--NADP reductase (305 aa).

FAD is bound by residues glutamate 31, tyrosine 42, valine 82, and aspartate 274.

It belongs to the ferredoxin--NADP reductase type 2 family. In terms of assembly, homodimer. It depends on FAD as a cofactor.

It catalyses the reaction 2 reduced [2Fe-2S]-[ferredoxin] + NADP(+) + H(+) = 2 oxidized [2Fe-2S]-[ferredoxin] + NADPH. The polypeptide is Ferredoxin--NADP reductase (Ignicoccus hospitalis (strain KIN4/I / DSM 18386 / JCM 14125)).